Here is a 622-residue protein sequence, read N- to C-terminus: Putative DEAD-box ATP-dependent RNA helicase 44 (622 aa).

The disordered stretch occupies residues 50 to 97 (DRRSIVQISRSNSDNDDGNRPRDVKRERHRSHDHDRNRESDREFRERE). The span at 66-97 (DGNRPRDVKRERHRSHDHDRNRESDREFRERE) shows a compositional bias: basic and acidic residues. Positions 241 to 436 (IPLGLEQRDV…RKFLRNPVVV (196 aa)) constitute a Helicase ATP-binding domain. 254-261 (SATGSGKT) serves as a coordination point for ATP. The short motif at 367–370 (DEAD) is the DEAD box element. The 147-residue stretch at 460-606 (RLKKLIDDLG…LVPPELARHE (147 aa)) folds into the Helicase C-terminal domain.

Belongs to the DEAD box helicase family. DDX23/PRP28 subfamily.

The catalysed reaction is ATP + H2O = ADP + phosphate + H(+). The protein is Putative DEAD-box ATP-dependent RNA helicase 44 (RH44) of Arabidopsis thaliana (Mouse-ear cress).